Consider the following 662-residue polypeptide: Mitochondrial Rho GTPase 1 (662 aa).

Residues 1-634 (MTKETIRVVI…AKDVDYRQTA (634 aa)) lie on the Cytoplasmic side of the membrane. The Miro 1 domain maps to 3–185 (KETIRVVICG…FYLCQRAITH (183 aa)). GTP-binding positions include 12–19 (GDEGVGKS), 62–64 (DTS), and 116–119 (NKCD). 2 consecutive EF-hand domains span residues 201–236 (LAVM…CFNK) and 330–365 (KGYR…TPGL). Residues Asp-214, Asn-216, Asp-218, Tyr-220, Glu-225, Asp-343, Asp-345, Asp-347, and Glu-354 each contribute to the Ca(2+) site. The 166-residue stretch at 446-611 (RKVFNCFVIG…FIKITEAALD (166 aa)) folds into the Miro 2 domain. GTP-binding positions include 455-462 (GKPCCGKS), 491-495 (ELKGG), and 560-563 (SKAD). The chain crosses the membrane as a helical; Anchor for type IV membrane protein span at residues 635–655 (LIFGSTVGFVALCSFTLMKLF). The Mitochondrial intermembrane segment spans residues 656–662 (KSSKFSK).

This sequence belongs to the mitochondrial Rho GTPase family.

The protein resides in the mitochondrion outer membrane. In terms of biological role, mitochondrial GTPase involved in mitochondrial trafficking. Probably involved in control of anterograde transport of mitochondria and their subcellular distribution. The polypeptide is Mitochondrial Rho GTPase 1 (GEM1) (Saccharomyces cerevisiae (strain ATCC 204508 / S288c) (Baker's yeast)).